We begin with the raw amino-acid sequence, 324 residues long: Annexin A10 (324 aa).

Annexin repeat units follow at residues 17-88 (FNPM…GLMY), 89-160 (PPPS…NLVQ), 171-243 (AMAA…AIVR), and 247-318 (DKPS…AICA).

The protein belongs to the annexin family.

In Mus musculus (Mouse), this protein is Annexin A10 (Anxa10).